The chain runs to 34 residues: Ornithine carbamoyltransferase, catabolic (34 aa).

Belongs to the aspartate/ornithine carbamoyltransferase superfamily. OTCase family. As to quaternary structure, probably nonameric or dodecameric.

The protein localises to the cytoplasm. It carries out the reaction carbamoyl phosphate + L-ornithine = L-citrulline + phosphate + H(+). It participates in amino-acid degradation; L-arginine degradation via ADI pathway; carbamoyl phosphate from L-arginine: step 2/2. This Pseudomonas putida (Arthrobacter siderocapsulatus) protein is Ornithine carbamoyltransferase, catabolic (arcB).